The primary structure comprises 274 residues: SWI/SNF chromatin-remodeling complex subunit snf30 (274 aa).

Polar residues-rich tracts occupy residues 123–150 (TLSYPPSNGDSSSYANGTDLHGNTGTMQ) and 157–167 (PSLTRSDSVSS). The disordered stretch occupies residues 123–167 (TLSYPPSNGDSSSYANGTDLHGNTGTMQQEEKANPSLTRSDSVSS).

As to quaternary structure, component of the SWI/SNF global transcription activator complex composed of at least arp9, arp42, snf5, snf22, snf30, sbf59, sol1, ssr1, ssr2, ssr3, ssr4 and tfg3.

Its subcellular location is the cytoplasm. It localises to the nucleus. Its function is as follows. Component of the SWI/SNF complex, an ATP-dependent chromatin remodeling complex, required for the positive and negative regulation of gene expression of a large number of genes. It changes chromatin structure by altering DNA-histone contacts within a nucleosome, leading eventually to a change in nucleosome position, thus facilitating or repressing binding of gene-specific transcription factors. This is SWI/SNF chromatin-remodeling complex subunit snf30 (snf30) from Schizosaccharomyces pombe (strain 972 / ATCC 24843) (Fission yeast).